A 207-amino-acid chain; its full sequence is 5-amino-6-(5-phosphoribosylamino)uracil reductase (207 aa).

Ser-6 is a binding site for substrate. Trp-8 is a binding site for NADP(+). Arg-22 contacts substrate. Residue Asp-38 participates in NADP(+) binding. Residues Leu-42 and Arg-45 each contribute to the substrate site. An NADP(+)-binding site is contributed by Ser-72. Glu-137 serves as a coordination point for substrate.

This sequence belongs to the HTP reductase family.

The enzyme catalyses 5-amino-6-(5-phospho-D-ribitylamino)uracil + NADP(+) = 5-amino-6-(5-phospho-D-ribosylamino)uracil + NADPH + H(+). It participates in cofactor biosynthesis; riboflavin biosynthesis; 5-amino-6-(D-ribitylamino)uracil from GTP: step 3/4. This is 5-amino-6-(5-phosphoribosylamino)uracil reductase (ribD2) from Buchnera aphidicola subsp. Acyrthosiphon pisum (strain APS) (Acyrthosiphon pisum symbiotic bacterium).